A 117-amino-acid polypeptide reads, in one-letter code: Structural toxin peptide sea anemone type 9a (117 aa).

The N-terminal stretch at 1-23 is a signal peptide; sequence MKTIIAIFSLAAMIVLVRPTPLE. A run of 3 repeats spans residues 28 to 56, 57 to 88, and 89 to 117. The interval 29–117 is 3 X approximate tandem repeats; that stretch reads RSIINVPCKK…GKCRKIHGCS (89 aa).

In terms of processing, contains 6 disulfide bonds. In terms of tissue distribution, expressed outside of acontia.

It is found in the secreted. Its subcellular location is the nematocyst. Functionally, putative neurotoxin. The sequence is that of Structural toxin peptide sea anemone type 9a from Calliactis polypus (Hermit crab anemone).